The primary structure comprises 75 residues: Small ribosomal subunit protein bS18 (75 aa).

It belongs to the bacterial ribosomal protein bS18 family. As to quaternary structure, part of the 30S ribosomal subunit. Forms a tight heterodimer with protein bS6.

Functionally, binds as a heterodimer with protein bS6 to the central domain of the 16S rRNA, where it helps stabilize the platform of the 30S subunit. This is Small ribosomal subunit protein bS18 from Desulforudis audaxviator (strain MP104C).